The sequence spans 989 residues: Autotransporter adhesin/invasin TibA (989 aa).

The signal sequence occupies residues 1–54 (MNKVYNTVWNESTGTWVVTSELTRKGGLRPRQIKRTVLAGLIAGLLMPSMPALA). 14 O-alpha-linked (D-glycero-D-manno-heptose) serine glycosylation sites follow: serine 74, serine 86, serine 93, serine 94, serine 97, serine 100, serine 112, serine 113, serine 116, serine 119, serine 124, serine 131, serine 132, and serine 135. 12 repeat units span residues 82–100 (TTIN…SATS), 101–119 (TTIN…SATS), 120–138 (STIN…SATN), 139–157 (TTVN…SAMG), 158–176 (TIIN…SATS), 177–195 (ASVT…IVKA), 196–214 (TSVN…SATD), 215–233 (TVLN…SAAK), 234–251 (TTIN…SATG), 252–270 (TSIY…SATN), 271–289 (TTVY…NVTE), and 290–308 (TTIT…SASK). The segment at 82–308 (TTINSGGKQY…QVEAGGSASK (227 aa)) is 12 X 19 AA approximate repeats. The span at 110-123 (HVSSGGSATSSTIN) shows a compositional bias: polar residues. The interval 110–146 (HVSSGGSATSSTINSGGHQHVSSGGSATNTTVNNGGR) is disordered. Residues 124-135 (SGGHQHVSSGGS) show a composition bias toward low complexity. Positions 136 to 146 (ATNTTVNNGGR) are enriched in polar residues. Residues serine 151, serine 154, serine 162, serine 170, serine 176, serine 181, serine 188, serine 189, serine 200, serine 226, serine 227, serine 230, serine 238, serine 248, serine 263, serine 264, serine 275, serine 294, serine 305, serine 313, and serine 322 are each glycosylated (O-alpha-linked (D-glycero-D-manno-heptose) serine). Residues 623-686 (WYLKADTPPP…GTSSSPVRRT (64 aa)) form a disordered region. Residues 629-638 (TPPPVTPPTN) show a composition bias toward pro residues. A run of 8 repeats spans residues 639 to 643 (PDADN), 644 to 648 (PDAGN), 649 to 653 (PDAGN), 654 to 658 (PDAGN), 659 to 663 (PDAGN), 664 to 668 (PDAGK), 669 to 673 (PGTGK), and 674 to 678 (PDAGT). Low complexity predominate over residues 639-667 (PDADNPDAGNPDAGNPDAGNPDAGNPDAG). Positions 639 to 678 (PDADNPDAGNPDAGNPDAGNPDAGNPDAGKPGTGKPDAGT) are 8 X 5 AA repeats of P-[DG]-[AGT]-[DGA]-[NKT]. Positions 721 to 989 (NTRAPGGVWG…TGGVGFRINF (269 aa)) constitute an Autotransporter domain.

Homohexamer. Post-translationally, glycosylated by TibC. Glycosylation is required for adhesion to and invasion of host cells. Glycosylation is dispensable for bacterial autoaggregation and biofilm formation.

Its subcellular location is the cell outer membrane. Mediates both adhesion to and invasion of human intestine epithelial cells. Also mediates bacterial cell aggregation via intercellular TibA-TibA interaction. Enhances biofilm formation. This is Autotransporter adhesin/invasin TibA from Escherichia coli O78:H11 (strain H10407 / ETEC).